Here is a 456-residue protein sequence, read N- to C-terminus: MARLLFSGQRLRPSFLRSYIRANPSSTPSATRAAINYRYNSNNAALQSASSSQGALTGIKIIDLSRVLAGPFCTQILADYGAEVTKVEAVGKGDDTRHWIMAGEKASWNESSGPISNYFAAVNRNKRSITVNFKKAEGRQLILDLIKDADVVVENFKPGTMERLGLGYDVLKELNPRIIYAGLSGYGRTGPYRTRGGYDPIAAAEAGLLHVTGEKNGPPVRAGIGLVDMSTGLFLHGAILSALIARARDGTGQRVDASLFETQLSLLTNVGLAWLNLGIEAERWGCQHPSIAPYDAFKTRDRYLVCGATNDNQYAALCCLLGVEHLVTDPRFITNPLRVQHREELAALLGPIFASKTIDEWIALFEPSGLPFGPINNMEATFAHPQTAARDMVIDVPMDAACAGSIKVIGPAVKFGDSKTGLRTGPPRLGQHTVEILEEIGMDAEAIAKYKEDGII.

Residues 1–33 (MARLLFSGQRLRPSFLRSYIRANPSSTPSATRA) constitute a mitochondrion transit peptide.

This sequence belongs to the CoA-transferase III family.

The protein localises to the mitochondrion. Its function is as follows. Acyl-CoA transferase; part of the Fusarium detoxification of benzoxazolinone cluster involved in the degradation of benzoxazolinones produced by the host plant. Maize, wheat, and rye produce the 2 benzoxazinone phytoanticipins 2,4-dihy-droxy-7-methoxy-1,4-benzoxazin-3-one (DIMBOA) and 2,4-dihydroxy-1,4-benzoxazin-3-one (DIBOA) that, due to their inherent instability once released, spontaneously degrade to the more stable corresponding benzoxazolinones, 6-methoxy-2-benzoxazolinone (MBOA) and 2-benzoxazolinone (BOA), respectively. The first step in the detoxification of benzoxazolinones involves the hydrolysis of the cyclic ester bond of benzoxazolinones by the gamma-lactamase FDB1 to aminophenols. FDB1 is able to convert 2-benzoxazolinone (BOA) into 2-aminophenol (2-AP), as well as 6-methoxy-2-benzoxazolinone (MBOA) into 5-methoxy-2-aminophenol (2-AMP). The N-malonyltransferase FDB2 then metabolizes aminophenols via N-malonylation to non-toxic malonamic acids. FDB2 converts 2-AP into N-(2-hydroxyphenyl) malonamic acid (HPMA) and 2-AMP into N-(2-hydroxy-4-methoxyphenyl) malonamic acid (HMPMA). The cluster also contains 2 transcription factors (FDB3 and FPSE_08121), an aldo-keto reductase (FPSE_08125) that possibly associates with a ketone component of BOA and MBOA degradation, an esterase (FPSE_08126), an acyl-CoA transferase (FPSE_08120), a solute carrier protein (FPSE_08119) and a transmembrane transporter (FPSE_08127) proposed to shuttle metabolites of benzoxazolinone degradation. This is Acyl-CoA transferase FPSE_08120 from Fusarium pseudograminearum (strain CS3096) (Wheat and barley crown-rot fungus).